Reading from the N-terminus, the 334-residue chain is Forkhead box protein N2 (334 aa).

Disordered regions lie at residues 1–52 and 83–108; these read MGPV…SGTT and SPLY…ASSK. Residues 108–204 constitute a DNA-binding region (fork-head); it reads KPPYSFSLLI…QALKKQPFSS (97 aa).

It localises to the nucleus. The sequence is that of Forkhead box protein N2 from Xenopus tropicalis (Western clawed frog).